The following is a 360-amino-acid chain: Dihydroorotate dehydrogenase (quinone) (360 aa).

Residues 65-69 and threonine 89 each bind FMN; that span reads AGLDK. Residue lysine 69 participates in substrate binding. Position 114–118 (114–118) interacts with substrate; that stretch reads NRLGF. Residues asparagine 147 and asparagine 180 each contribute to the FMN site. Residue asparagine 180 coordinates substrate. Catalysis depends on serine 183, which acts as the Nucleophile. Asparagine 185 lines the substrate pocket. 2 residues coordinate FMN: lysine 225 and threonine 253. Residue 254-255 participates in substrate binding; that stretch reads NT. FMN-binding positions include glycine 276, glycine 305, and 326 to 327; that span reads YT.

It belongs to the dihydroorotate dehydrogenase family. Type 2 subfamily. Monomer. Requires FMN as cofactor.

Its subcellular location is the cell membrane. The catalysed reaction is (S)-dihydroorotate + a quinone = orotate + a quinol. It functions in the pathway pyrimidine metabolism; UMP biosynthesis via de novo pathway; orotate from (S)-dihydroorotate (quinone route): step 1/1. Its function is as follows. Catalyzes the conversion of dihydroorotate to orotate with quinone as electron acceptor. The sequence is that of Dihydroorotate dehydrogenase (quinone) from Verminephrobacter eiseniae (strain EF01-2).